A 359-amino-acid polypeptide reads, in one-letter code: DNA polymerase IV (359 aa).

In terms of domain architecture, UmuC spans 4-185 (IIHIDMDCYF…LSLRKIPGVG (182 aa)). Positions 8 and 103 each coordinate Mg(2+). E104 is a catalytic residue.

Belongs to the DNA polymerase type-Y family. In terms of assembly, monomer. The cofactor is Mg(2+).

The protein localises to the cytoplasm. The catalysed reaction is DNA(n) + a 2'-deoxyribonucleoside 5'-triphosphate = DNA(n+1) + diphosphate. Functionally, poorly processive, error-prone DNA polymerase involved in untargeted mutagenesis. Copies undamaged DNA at stalled replication forks, which arise in vivo from mismatched or misaligned primer ends. These misaligned primers can be extended by PolIV. Exhibits no 3'-5' exonuclease (proofreading) activity. May be involved in translesional synthesis, in conjunction with the beta clamp from PolIII. The protein is DNA polymerase IV of Shewanella sp. (strain MR-7).